A 582-amino-acid polypeptide reads, in one-letter code: ATP-dependent lipid A-core flippase (582 aa).

5 consecutive transmembrane segments (helical) span residues 27-47 (LIVAVIALVINAISDTYMISL), 69-89 (LIIFVMMFIRGTSGFVSTYCL), 142-162 (ALVSIVREGASIIGLLVLMFY), 165-185 (WQLSLVLFAVAPVVAWGIGVV), and 249-269 (AAANPIIQMIASFAIVAVLYL). The ABC transmembrane type-1 domain maps to 28–310 (IVAVIALVIN…LTNVTSQFQR (283 aa)). The ABC transporter domain maps to 342-578 (VSVKDVSFTY…NGAYAQLHRI (237 aa)). 376 to 383 (GRSGSGKS) lines the ATP pocket.

It belongs to the ABC transporter superfamily. Lipid exporter (TC 3.A.1.106) family. As to quaternary structure, homodimer.

It is found in the cell inner membrane. It carries out the reaction ATP + H2O + lipid A-core oligosaccharideSide 1 = ADP + phosphate + lipid A-core oligosaccharideSide 2.. Its function is as follows. Involved in lipopolysaccharide (LPS) biosynthesis. Translocates lipid A-core from the inner to the outer leaflet of the inner membrane. Transmembrane domains (TMD) form a pore in the inner membrane and the ATP-binding domain (NBD) is responsible for energy generation. This chain is ATP-dependent lipid A-core flippase, found in Vibrio parahaemolyticus serotype O3:K6 (strain RIMD 2210633).